Reading from the N-terminus, the 87-residue chain is Exodeoxyribonuclease 7 small subunit (87 aa).

Belongs to the XseB family. Heterooligomer composed of large and small subunits.

The protein resides in the cytoplasm. It catalyses the reaction Exonucleolytic cleavage in either 5'- to 3'- or 3'- to 5'-direction to yield nucleoside 5'-phosphates.. Bidirectionally degrades single-stranded DNA into large acid-insoluble oligonucleotides, which are then degraded further into small acid-soluble oligonucleotides. This Serratia proteamaculans (strain 568) protein is Exodeoxyribonuclease 7 small subunit.